A 689-amino-acid chain; its full sequence is Transcription factor BHLH42 (689 aa).

2 disordered regions span residues 192 to 287 (IDHH…NPRV) and 458 to 489 (DDNN…ANHV). Positions 206-217 (EHSTSNLATSSV) are enriched in polar residues. Residues 246–271 (EEQEQEQEEDEDDDDDDDDEEEAESD) show a composition bias toward acidic residues. The basic motif stretch occupies residues 483–496 (ELSANHVLAERRRR). The region spanning 483–532 (ELSANHVLAERRRREKLNERFIILRSLVPFVTKMDKASILGDTIEYVKQL) is the bHLH domain. A helix-loop-helix motif region spans residues 497 to 532 (EKLNERFIILRSLVPFVTKMDKASILGDTIEYVKQL). Residues 547 to 570 (EIDQRSRSSGDPQRSGAKAATDKR) form a disordered region.

This sequence belongs to the bHLH protein family. As to quaternary structure, interacts with MYB123. Expressed in the inner pericarp of maturing fruits.

The protein resides in the nucleus. Functionally, transcription activator involved in the spatiotemporal regulation of anthocyanin biosynthesis specifically in the inner pericarp of red-fleshed kiwifruits. Functions in association with MYB123 to activate the promoters of LDOX (ANS) and F3GT1 that encode the dedicated enzymes for anthocyanin biosynthesis. This is Transcription factor BHLH42 from Actinidia chinensis var. chinensis (Chinese soft-hair kiwi).